Here is a 123-residue protein sequence, read N- to C-terminus: VQ motif-containing protein 29 (123 aa).

Residues 24–55 are disordered; sequence TKNYLTSLHSTRKQPSKPLKRPAISSPLNPMH. Residues 33-43 are compositionally biased toward basic residues; it reads STRKQPSKPLK. Residues 66–75 carry the VQ motif; that stretch reads FKVLVQRLTG. Residues 77-94 show a composition bias toward basic and acidic residues; that stretch reads PEHETVQAKPLKTSDDAA. Residues 77–123 form a disordered region; it reads PEHETVQAKPLKTSDDAAKQSSSSFAFDPSSSWGDFSFQNPANISRW. The segment covering 97–108 has biased composition (low complexity); it reads SSSSFAFDPSSS. Residues 109–123 show a composition bias toward polar residues; sequence WGDFSFQNPANISRW.

The protein localises to the nucleus. May function as negative regulator of flowering transition. This chain is VQ motif-containing protein 29, found in Arabidopsis thaliana (Mouse-ear cress).